A 117-amino-acid chain; its full sequence is Ribonuclease P protein component (117 aa).

This sequence belongs to the RnpA family. As to quaternary structure, consists of a catalytic RNA component (M1 or rnpB) and a protein subunit.

It catalyses the reaction Endonucleolytic cleavage of RNA, removing 5'-extranucleotides from tRNA precursor.. In terms of biological role, RNaseP catalyzes the removal of the 5'-leader sequence from pre-tRNA to produce the mature 5'-terminus. It can also cleave other RNA substrates such as 4.5S RNA. The protein component plays an auxiliary but essential role in vivo by binding to the 5'-leader sequence and broadening the substrate specificity of the ribozyme. This chain is Ribonuclease P protein component, found in Staphylococcus aureus (strain bovine RF122 / ET3-1).